Here is a 159-residue protein sequence, read N- to C-terminus: Ribosomal RNA large subunit methyltransferase H (159 aa).

S-adenosyl-L-methionine contacts are provided by residues Leu76, Gly107, and 126-131 (ISSLTL).

Belongs to the RNA methyltransferase RlmH family. Homodimer.

It localises to the cytoplasm. It carries out the reaction pseudouridine(1915) in 23S rRNA + S-adenosyl-L-methionine = N(3)-methylpseudouridine(1915) in 23S rRNA + S-adenosyl-L-homocysteine + H(+). Its function is as follows. Specifically methylates the pseudouridine at position 1915 (m3Psi1915) in 23S rRNA. The polypeptide is Ribosomal RNA large subunit methyltransferase H (Cupriavidus metallidurans (strain ATCC 43123 / DSM 2839 / NBRC 102507 / CH34) (Ralstonia metallidurans)).